A 302-amino-acid polypeptide reads, in one-letter code: Ornithine carbamoyltransferase (302 aa).

Carbamoyl phosphate is bound by residues 52 to 55 (STRT), Gln-79, Arg-103, and 130 to 133 (HPCQ). L-ornithine-binding positions include Asn-161, Asp-221, and 225 to 226 (SM). Carbamoyl phosphate is bound by residues 261–262 (CL) and Arg-289.

The protein belongs to the aspartate/ornithine carbamoyltransferase superfamily. OTCase family.

It is found in the cytoplasm. It carries out the reaction carbamoyl phosphate + L-ornithine = L-citrulline + phosphate + H(+). Its pathway is amino-acid biosynthesis; L-arginine biosynthesis; L-arginine from L-ornithine and carbamoyl phosphate: step 1/3. Functionally, reversibly catalyzes the transfer of the carbamoyl group from carbamoyl phosphate (CP) to the N(epsilon) atom of ornithine (ORN) to produce L-citrulline. The polypeptide is Ornithine carbamoyltransferase (Methanospirillum hungatei JF-1 (strain ATCC 27890 / DSM 864 / NBRC 100397 / JF-1)).